The primary structure comprises 205 residues: Isochorismatase domain-containing protein 2 (205 aa).

It belongs to the isochorismatase family.

This chain is Isochorismatase domain-containing protein 2 (isoc2), found in Xenopus laevis (African clawed frog).